A 1275-amino-acid chain; its full sequence is ATP-dependent helicase/nuclease subunit A (1275 aa).

In terms of domain architecture, UvrD-like helicase ATP-binding spans 4–481 (PKWTKEQLEV…IMLYKNFRSR (478 aa)). 25–32 (AAAGSGKT) contacts ATP. The region spanning 531-839 (TEIHLIQKDN…RIMSIHKSKG (309 aa)) is the UvrD-like helicase C-terminal domain.

It belongs to the helicase family. AddA subfamily. Heterodimer of AddA and AddB/RexB. Requires Mg(2+) as cofactor.

It catalyses the reaction Couples ATP hydrolysis with the unwinding of duplex DNA by translocating in the 3'-5' direction.. The enzyme catalyses ATP + H2O = ADP + phosphate + H(+). Its function is as follows. The heterodimer acts as both an ATP-dependent DNA helicase and an ATP-dependent, dual-direction single-stranded exonuclease. Recognizes the chi site generating a DNA molecule suitable for the initiation of homologous recombination. The AddA nuclease domain is required for chi fragment generation; this subunit has the helicase and 3' -&gt; 5' nuclease activities. This Clostridioides difficile (strain 630) (Peptoclostridium difficile) protein is ATP-dependent helicase/nuclease subunit A.